The following is a 359-amino-acid chain: Insulin gene enhancer protein isl-2a (359 aa).

LIM zinc-binding domains lie at 27-80 (CVGC…CKRD) and 30-143 (CGSQ…RADH). A disordered region spans residues 171-190 (EPVPVRQPPHRNHVHKQSEK). Residues 191–250 (TTRVRTVLNEKQLHTLRTCYNANPRPDALMKEQLVEMTGLSPRVIRVWFQNKRCKDKKKS) constitute a DNA-binding region (homeobox). Low complexity predominate over residues 326–336 (ESGSLGNSSGS). A disordered region spans residues 326–359 (ESGSLGNSSGSDVTSLSSQLPDTPNSMVPSPVET). The segment covering 337–359 (DVTSLSSQLPDTPNSMVPSPVET) has biased composition (polar residues).

It is found in the nucleus. Its function is as follows. Binds to one of the cis-acting domain of the insulin gene enhancer. May be involved in subtype specialization of primary motoneurons. The sequence is that of Insulin gene enhancer protein isl-2a (isl2a) from Danio rerio (Zebrafish).